Reading from the N-terminus, the 119-residue chain is Ribonuclease P protein component (119 aa).

This sequence belongs to the RnpA family. In terms of assembly, consists of a catalytic RNA component (M1 or rnpB) and a protein subunit.

The enzyme catalyses Endonucleolytic cleavage of RNA, removing 5'-extranucleotides from tRNA precursor.. RNaseP catalyzes the removal of the 5'-leader sequence from pre-tRNA to produce the mature 5'-terminus. It can also cleave other RNA substrates such as 4.5S RNA. The protein component plays an auxiliary but essential role in vivo by binding to the 5'-leader sequence and broadening the substrate specificity of the ribozyme. The chain is Ribonuclease P protein component from Yersinia enterocolitica serotype O:8 / biotype 1B (strain NCTC 13174 / 8081).